The primary structure comprises 84 residues: MSEFWLCFSCCIAEQPQPKRRRRIDRSMIGEPTNFAHTAHVGSGDLFSGMNSVSSIQNQMQSKGGYGGGMPANVQMQLVDTKAG.

Residues Cys10 and Cys11 are each lipidated (S-palmitoyl cysteine). A CRIB domain is found at 29–42 (IGEPTNFAHTAHVG). Ser43 and Ser52 each carry phosphoserine.

The protein belongs to the CDC42SE/SPEC family. As to quaternary structure, interacts with CDC42 (in GTP-bound form). Interacts weakly with RAC1 and not at all with RHOA.

The protein localises to the cytoplasm. Its subcellular location is the cytoskeleton. The protein resides in the cell membrane. It is found in the cell projection. It localises to the phagocytic cup. Probably involved in the organization of the actin cytoskeleton by acting downstream of CDC42, inducing actin filament assembly. Alters CDC42-induced cell shape changes. In activated T-cells, may play a role in CDC42-mediated F-actin accumulation at the immunological synapse. May play a role in early contractile events in phagocytosis in macrophages. The protein is CDC42 small effector protein 2 (CDC42SE2) of Pongo abelii (Sumatran orangutan).